Reading from the N-terminus, the 269-residue chain is Protein MrkE (269 aa).

The Response regulatory domain maps to 59-173 (KVIIVEDEFL…RIINMLQKLT (115 aa)). At D110 the chain carries 4-aspartylphosphate. In terms of domain architecture, HTH LytTR-type spans 197–269 (INLIKDERII…VAQVSIANRF (73 aa)).

May be involved in the regulation of fimbrial expression. The chain is Protein MrkE (mrkE) from Klebsiella pneumoniae.